Here is a 338-residue protein sequence, read N- to C-terminus: MTKQKVAILGPGSWGTALSQVLNDNGHDVRLWGNIPDQIEEINTKHTNRHYFKDIVLDKNITATLDLGQALSDVDAVLFVVPTKVTRLVARQVAAILDHKVVVMHASKGLEPETHERLSTILEEVIPAHFRSEVVVVSGPSHAEETIVRDITLITAASKDIEAAKYVQSLFSNHYFRLYTNTDVIGVETAGALKNIIAVGAGALHGLGYGDNAKAAVITRGLAEITRLGVKLGADPLTYSGLSGVGDLIVTGTSVHSRNWRAGAALGRGEKLEDIERNMGMVIEGIATTKVAYEIAQDLGVYMPITTAIYKSIYEGADIKESILGMMSNEFRSENEWH.

NADPH contacts are provided by Ser-13, Trp-14, and Lys-108. Sn-glycerol 3-phosphate is bound by residues Lys-108, Gly-139, and Ser-141. Ala-143 contacts NADPH. Sn-glycerol 3-phosphate contacts are provided by Lys-194, Asp-247, Ser-257, Arg-258, and Asn-259. Residue Lys-194 is the Proton acceptor of the active site. Arg-258 is a binding site for NADPH. The NADPH site is built by Val-282 and Glu-284.

Its subcellular location is the cytoplasm. It carries out the reaction sn-glycerol 3-phosphate + NAD(+) = dihydroxyacetone phosphate + NADH + H(+). The catalysed reaction is sn-glycerol 3-phosphate + NADP(+) = dihydroxyacetone phosphate + NADPH + H(+). It functions in the pathway membrane lipid metabolism; glycerophospholipid metabolism. Catalyzes the reduction of the glycolytic intermediate dihydroxyacetone phosphate (DHAP) to sn-glycerol 3-phosphate (G3P), the key precursor for phospholipid synthesis. This Streptococcus pyogenes serotype M6 (strain ATCC BAA-946 / MGAS10394) protein is Glycerol-3-phosphate dehydrogenase [NAD(P)+].